The primary structure comprises 184 residues: Vacuolar protein sorting-associated protein 68 (184 aa).

Met1 is modified (N-acetylmethionine). Ser8 carries the post-translational modification Phosphoserine. The helical transmembrane segment at 26 to 46 (GVYLSGALYALGFWIFLDAVL) threads the bilayer. Asn52 carries an N-linked (GlcNAc...) asparagine glycan. 3 helical membrane-spanning segments follow: residues 56–76 (VHVT…TLIV), 115–135 (LFFG…VLII), and 150–170 (MGVN…VLWI).

Belongs to the UPF0220 family.

It is found in the vacuole membrane. The protein resides in the mitochondrion. In terms of biological role, involved in vacuolar protein sorting. The protein is Vacuolar protein sorting-associated protein 68 (VPS68) of Saccharomyces cerevisiae (strain ATCC 204508 / S288c) (Baker's yeast).